The chain runs to 542 residues: Chondroitin sulfate N-acetylgalactosaminyltransferase 2 (542 aa).

At M1–R11 the chain is on the cytoplasmic side. A helical; Signal-anchor for type II membrane protein membrane pass occupies residues T12–L32. The Lumenal portion of the chain corresponds to E33 to G542. Residue N41 is glycosylated (N-linked (GlcNAc...) asparagine). Positions A59–N105 form a coiled coil. Residue N333 is glycosylated (N-linked (GlcNAc...) asparagine). Positions 369 and 486 each coordinate a divalent metal cation.

This sequence belongs to the chondroitin N-acetylgalactosaminyltransferase family. In terms of tissue distribution, ubiquitous.

It is found in the golgi apparatus. It localises to the golgi stack membrane. It catalyses the reaction 3-O-(beta-D-GlcA-(1-&gt;3)-beta-D-Gal-(1-&gt;3)-beta-D-Gal-(1-&gt;4)-beta-D-Xyl)-L-seryl-[protein] + UDP-N-acetyl-alpha-D-galactosamine = 3-O-(beta-D-GalNAc-(1-&gt;4)-beta-D-GlcA-(1-&gt;3)-beta-D-Gal-(1-&gt;3)-beta-D-Gal-(1-&gt;4)-beta-D-Xyl)-L-seryl-[protein] + UDP + H(+). In terms of biological role, transfers 1,4-N-acetylgalactosamine (GalNAc) from UDP-GalNAc to the non-reducing end of glucuronic acid (GlcUA). Required for addition of the first GalNAc to the core tetrasaccharide linker and for elongation of chondroitin chains. This is Chondroitin sulfate N-acetylgalactosaminyltransferase 2 (CSGALNACT2) from Homo sapiens (Human).